A 91-amino-acid chain; its full sequence is UPF0250 protein PP_4802 (91 aa).

It belongs to the UPF0250 family.

In Pseudomonas putida (strain ATCC 47054 / DSM 6125 / CFBP 8728 / NCIMB 11950 / KT2440), this protein is UPF0250 protein PP_4802.